A 198-amino-acid chain; its full sequence is Recombination protein RecR (198 aa).

The C4-type zinc-finger motif lies at 57-72 (CSVCGHITDRDPCYIC). Positions 80 to 175 (SVVCVVQEPK…KVTRIAHGLP (96 aa)) constitute a Toprim domain.

It belongs to the RecR family.

Its function is as follows. May play a role in DNA repair. It seems to be involved in an RecBC-independent recombinational process of DNA repair. It may act with RecF and RecO. This Bacillus thuringiensis (strain Al Hakam) protein is Recombination protein RecR.